Consider the following 209-residue polypeptide: Molybdenum cofactor guanylyltransferase (209 aa).

GTP contacts are provided by residues 16-18, K28, N56, D69, and D103; that span reads LAG. D103 is a binding site for Mg(2+).

It belongs to the MobA family. As to quaternary structure, monomer. The cofactor is Mg(2+).

Its subcellular location is the cytoplasm. It catalyses the reaction Mo-molybdopterin + GTP + H(+) = Mo-molybdopterin guanine dinucleotide + diphosphate. Its function is as follows. Transfers a GMP moiety from GTP to Mo-molybdopterin (Mo-MPT) cofactor (Moco or molybdenum cofactor) to form Mo-molybdopterin guanine dinucleotide (Mo-MGD) cofactor. The chain is Molybdenum cofactor guanylyltransferase from Rhizobium johnstonii (strain DSM 114642 / LMG 32736 / 3841) (Rhizobium leguminosarum bv. viciae).